A 450-amino-acid polypeptide reads, in one-letter code: Glutathione reductase (450 aa).

FAD-binding residues include Ser14, Gly15, Glu34, Thr41, Cys42, and Lys50. Position 14 (Ser14) interacts with glutathione. The cysteines at positions 42 and 47 are disulfide-linked. Tyr99 is a glutathione binding site. Ala115 lines the FAD pocket. The NADP(+) site is built by Ala175, Ile178, Glu181, Arg198, Arg204, and Gly262. Asp303 is a binding site for FAD. An NADP(+)-binding site is contributed by Glu309. Thr311 contributes to the FAD binding site. Arg319 contacts glutathione. Val342 is a binding site for NADP(+). FAD is bound at residue His439. His439 (proton acceptor) is an active-site residue.

The protein belongs to the class-I pyridine nucleotide-disulfide oxidoreductase family. Homodimer. Requires FAD as cofactor.

It is found in the cytoplasm. It catalyses the reaction 2 glutathione + NADP(+) = glutathione disulfide + NADPH + H(+). Functionally, catalyzes the reduction of glutathione disulfide (GSSG) to reduced glutathione (GSH). Constitutes the major mechanism to maintain a high GSH:GSSG ratio in the cytosol. This is Glutathione reductase (gor) from Escherichia coli (strain K12).